The sequence spans 41 residues: Antifungal peptide 2 (41 aa).

The residue at position 1 (Q1) is a Pyrrolidone carboxylic acid. 5 disulfides stabilise this stretch: C3/C17, C7/C37, C11/C23, C16/C30, and C35/C39. The Chitin-binding type-1 domain occupies 4–41 (ASRCPRPCNAGLCCSIYGYCGSGAAYCGAGNCRCQCRG).

Monomer.

Functionally, has antifungal activity against P.infestans, A.lycopersici, V.dahliae, G.zeae, A.nicotianae, F.moniliforme, F.oxysporum and C.gossypii. This chain is Antifungal peptide 2, found in Eucommia ulmoides (Hardy rubber tree).